The chain runs to 88 residues: MAHKKGVGSSKNGRDSKAKRLGVKRYAGQFVTAGSILVRQRGTKFHPGNNVGIGGDDTLFAKIDGYVVFERKGKNKKQVSVYPQNVAI.

This sequence belongs to the bacterial ribosomal protein bL27 family.

This is Large ribosomal subunit protein bL27 from Carboxydothermus hydrogenoformans (strain ATCC BAA-161 / DSM 6008 / Z-2901).